The chain runs to 428 residues: Nocturnin (428 aa).

The transit peptide at 1-72 (MYQSPRRLCS…PMGNGTSRLY (72 aa)) directs the protein to the mitochondrion. A disordered region spans residues 21-66 (RRTLVPGPRRTLAPPVLGSRPASPQLQAAASGAARSRPRTVSPMGN). The segment covering 39–55 (SRPASPQLQAAASGAAR) has biased composition (low complexity). Glu-192 provides a ligand contact to Mg(2+). Substrate-binding positions include Glu-192, 216–218 (KPW), Asn-260, 283–286 (HLKA), and 321–323 (DFN). An interaction with PPARG region spans residues 340–350 (NLNSAYKLLSP). His-411 lines the substrate pocket.

The protein belongs to the CCR4/nocturin family. In terms of assembly, interacts with PPARG. The cofactor is Mg(2+).

It is found in the cytoplasm. Its subcellular location is the nucleus. It localises to the perinuclear region. The protein resides in the mitochondrion. The enzyme catalyses NADP(+) + H2O = phosphate + NAD(+). It catalyses the reaction NADPH + H2O = phosphate + NADH. Its function is as follows. Phosphatase which catalyzes the conversion of NADP(+) to NAD(+) and of NADPH to NADH. Shows a small preference for NADPH over NADP(+). Represses translation and promotes degradation of target mRNA molecules. Plays an important role in post-transcriptional regulation of metabolic genes under circadian control. Exerts a rhythmic post-transcriptional control of genes necessary for metabolic functions including nutrient absorption, glucose/insulin sensitivity, lipid metabolism, adipogenesis, inflammation and osteogenesis. Plays an important role in favoring adipogenesis over osteoblastogenesis and acts as a key regulator of the adipogenesis/osteogenesis balance. Promotes adipogenesis by facilitating PPARG nuclear translocation which activates its transcriptional activity. Regulates circadian expression of NOS2 in the liver and negatively regulates the circadian expression of IGF1 in the bone. Critical for proper development of early embryos. This chain is Nocturnin, found in Rattus norvegicus (Rat).